Here is a 257-residue protein sequence, read N- to C-terminus: Snake venom serine protease Haly-2 (257 aa).

A signal peptide spans 1–18; that stretch reads MVLIRVLANLLILQLSYA. A propeptide spanning residues 19–24 is cleaved from the precursor; that stretch reads QKSSEL. Residues 25–248 enclose the Peptidase S1 domain; sequence IIGGDECNIN…HLEWIRSIIA (224 aa). Intrachain disulfides connect cysteine 31–cysteine 162, cysteine 49–cysteine 65, cysteine 97–cysteine 255, cysteine 141–cysteine 209, cysteine 173–cysteine 188, and cysteine 199–cysteine 224. Histidine 64 serves as the catalytic Charge relay system. A glycan (N-linked (GlcNAc...) asparagine) is linked at asparagine 100. The active-site Charge relay system is the aspartate 109. Serine 203 (charge relay system) is an active-site residue.

Belongs to the peptidase S1 family. Snake venom subfamily. As to quaternary structure, monomer. As to expression, expressed by the venom gland.

Its subcellular location is the secreted. Snake venom serine protease that may act in the hemostasis system of the prey. The polypeptide is Snake venom serine protease Haly-2 (Gloydius brevicauda (Korean slamosa snake)).